Consider the following 135-residue polypeptide: ATP synthase epsilon chain (135 aa).

This sequence belongs to the ATPase epsilon chain family. As to quaternary structure, F-type ATPases have 2 components, CF(1) - the catalytic core - and CF(0) - the membrane proton channel. CF(1) has five subunits: alpha(3), beta(3), gamma(1), delta(1), epsilon(1). CF(0) has three main subunits: a, b and c.

It localises to the cell inner membrane. In terms of biological role, produces ATP from ADP in the presence of a proton gradient across the membrane. The sequence is that of ATP synthase epsilon chain from Rhodopseudomonas palustris (strain HaA2).